A 138-amino-acid chain; its full sequence is Putative pre-16S rRNA nuclease (138 aa).

The protein belongs to the YqgF nuclease family.

The protein resides in the cytoplasm. Its function is as follows. Could be a nuclease involved in processing of the 5'-end of pre-16S rRNA. The polypeptide is Putative pre-16S rRNA nuclease (Fusobacterium nucleatum subsp. nucleatum (strain ATCC 25586 / DSM 15643 / BCRC 10681 / CIP 101130 / JCM 8532 / KCTC 2640 / LMG 13131 / VPI 4355)).